The primary structure comprises 301 residues: Probable 2-oxoglutarate-dependent dioxygenase AOP1 (301 aa).

In terms of domain architecture, Fe2OG dioxygenase spans 158–262 (TYYLTRLMKY…RYSTGLFSIP (105 aa)). 3 residues coordinate Fe cation: H186, D188, and H243. R253 contacts 2-oxoglutarate.

This sequence belongs to the iron/ascorbate-dependent oxidoreductase family. Requires Fe(2+) as cofactor.

Its function is as follows. Probable 2-oxoglutarate-dependent dioxygenase that may be involved in glucosinolates biosynthesis. May play a role in the production of aliphatic glucosinolates. The sequence is that of Probable 2-oxoglutarate-dependent dioxygenase AOP1 (AOP1) from Arabidopsis thaliana (Mouse-ear cress).